A 141-amino-acid polypeptide reads, in one-letter code: Large ribosomal subunit protein uL11 (141 aa).

It belongs to the universal ribosomal protein uL11 family. Part of the ribosomal stalk of the 50S ribosomal subunit. Interacts with L10 and the large rRNA to form the base of the stalk. L10 forms an elongated spine to which L12 dimers bind in a sequential fashion forming a multimeric L10(L12)X complex. One or more lysine residues are methylated.

In terms of biological role, forms part of the ribosomal stalk which helps the ribosome interact with GTP-bound translation factors. This is Large ribosomal subunit protein uL11 from Shouchella clausii (strain KSM-K16) (Alkalihalobacillus clausii).